A 498-amino-acid polypeptide reads, in one-letter code: ATP synthase subunit beta, chloroplastic (498 aa).

The span at 1 to 14 (MRTNPTTSRPGVST) shows a compositional bias: polar residues. A disordered region spans residues 1-20 (MRTNPTTSRPGVSTSEEKST). 172–179 (GGAGVGKT) contributes to the ATP binding site.

It belongs to the ATPase alpha/beta chains family. As to quaternary structure, F-type ATPases have 2 components, CF(1) - the catalytic core - and CF(0) - the membrane proton channel. CF(1) has five subunits: alpha(3), beta(3), gamma(1), delta(1), epsilon(1). CF(0) has four main subunits: a(1), b(1), b'(1) and c(9-12).

Its subcellular location is the plastid. The protein localises to the chloroplast thylakoid membrane. It carries out the reaction ATP + H2O + 4 H(+)(in) = ADP + phosphate + 5 H(+)(out). In terms of biological role, produces ATP from ADP in the presence of a proton gradient across the membrane. The catalytic sites are hosted primarily by the beta subunits. The sequence is that of ATP synthase subunit beta, chloroplastic from Hordeum vulgare (Barley).